Consider the following 1725-residue polypeptide: Latrophilin Cirl (1725 aa).

Residues M1 to R757 lie on the Extracellular side of the membrane. The SUEL-type lectin domain occupies A18–I107. N135 carries N-linked (GlcNAc...) asparagine glycosylation. Residues A164–G284 are disordered. 2 stretches are compositionally biased toward low complexity: residues P167–T176 and S224–N236. 7 N-linked (GlcNAc...) asparagine glycosylation sites follow: N236, N278, N326, N388, N645, N693, and N720. The segment covering L259–N282 has biased composition (polar residues). The interval D361 to S390 is disordered. Residues A371–S390 show a composition bias toward polar residues. The 194-residue stretch at R551 to H744 folds into the GAIN-B domain. Disulfide bonds link C699–C726 and C714–C728. Residues C699–H744 form a GPS region. Residues I758–L778 traverse the membrane as a helical segment. The Cytoplasmic segment spans residues K779–T791. The helical transmembrane segment at S792–I812 threads the bilayer. Residues E813 to S818 lie on the Extracellular side of the membrane. A helical membrane pass occupies residues I819–F839. Topologically, residues C840–V865 are cytoplasmic. Residues N866–I886 traverse the membrane as a helical segment. At D887–F910 the chain is on the extracellular side. A helical membrane pass occupies residues V911–I931. The Cytoplasmic portion of the chain corresponds to M932–S958. Residues F959 to A979 traverse the membrane as a helical segment. Topologically, residues K980 to A986 are extracellular. A helical membrane pass occupies residues P987–F1007. Topologically, residues H1008 to K1725 are cytoplasmic. The interval T1056–Q1088 is disordered. The residue at position 1153 (S1153) is a Phosphoserine. 4 disordered regions span residues H1236 to R1263, Q1309 to H1337, G1472 to R1555, and L1636 to H1705. Basic residues predominate over residues N1237–G1246. 2 positions are modified to phosphoserine: S1255 and S1262. Over residues Q1309–L1327 the composition is skewed to low complexity. A phosphoserine mark is found at S1328 and S1329. Positions G1478 to K1496 are enriched in low complexity. Composition is skewed to acidic residues over residues D1505 to T1522 and C1532 to D1543. Residues Q1651–Q1666 show a composition bias toward polar residues. A compositionally biased stretch (low complexity) spans S1667–A1683. Positions P1684–T1693 are enriched in basic residues. The span at Q1694 to H1705 shows a compositional bias: low complexity.

Belongs to the G-protein coupled receptor 2 family. LN-TM7 subfamily. Forms a heterodimer, consisting of a large extracellular region non-covalently linked to a seven-transmembrane moiety. Post-translationally, proteolytically cleaved into 2 subunits, an extracellular subunit and a seven-transmembrane subunit.

The protein resides in the cell membrane. The protein is Latrophilin Cirl of Drosophila mojavensis (Fruit fly).